The chain runs to 660 residues: Secretin PulD (660 aa).

The signal sequence occupies residues 1–27 (MIIANVIRSFSLTLLIFAALLFRPAAA). The interval 28 to 124 (EEFSASFKGT…VASDAAPGIG (97 aa)) is N0. The tract at residues 126–190 (EVVTRVVPLT…TIVERVDNAG (65 aa)) is N1. The tract at residues 191–264 (DRSVVTVPLS…MIKQLDRQQA (74 aa)) is N2. Residues 267–341 (GNTKVIYLKY…DLERVIAQLD (75 aa)) are N3. A secretin region spans residues 346–596 (QVLVEAIIAE…LFIRPTVIRD (251 aa)). A s domain region spans residues 598 to 660 (DEYRQASSGQ…IDAFNLGGNL (63 aa)).

The protein belongs to the bacterial secretin family. GSP D subfamily. Forms a cylindrical channel with 15 subunits.

Its subcellular location is the cell outer membrane. Its function is as follows. Involved in a type II secretion system (T2SS, formerly general secretion pathway, GSP) for the export of proteins. Required for the translocation of pullulanase. This subunit forms the outer membrane channel. This chain is Secretin PulD (pulD), found in Klebsiella pneumoniae.